The chain runs to 404 residues: Pyrophosphate--fructose 6-phosphate 1-phosphotransferase (404 aa).

Glycine 12 contributes to the diphosphate binding site. A Mg(2+)-binding site is contributed by aspartate 121. Residues 149 to 151, 194 to 196, glutamate 266, and 323 to 326 contribute to the substrate site; these read TID, MGR, and YFSR. The active-site Proton acceptor is aspartate 151.

This sequence belongs to the phosphofructokinase type A (PFKA) family. PPi-dependent PFK group II subfamily. Clade 'P' sub-subfamily. As to quaternary structure, homodimer. The cofactor is Mg(2+).

The protein localises to the cytoplasm. It carries out the reaction beta-D-fructose 6-phosphate + diphosphate = beta-D-fructose 1,6-bisphosphate + phosphate + H(+). The protein operates within carbohydrate degradation; glycolysis; D-glyceraldehyde 3-phosphate and glycerone phosphate from D-glucose: step 3/4. Non-allosteric. Catalyzes the phosphorylation of D-fructose 6-phosphate, the first committing step of glycolysis. Uses inorganic phosphate (PPi) as phosphoryl donor instead of ATP like common ATP-dependent phosphofructokinases (ATP-PFKs), which renders the reaction reversible, and can thus function both in glycolysis and gluconeogenesis. Consistently, PPi-PFK can replace the enzymes of both the forward (ATP-PFK) and reverse (fructose-bisphosphatase (FBPase)) reactions. This Propionibacterium freudenreichii subsp. shermanii (strain ATCC 9614 / DSM 4902 / CIP 103027 / NCIMB 8099 / CIRM-BIA1) protein is Pyrophosphate--fructose 6-phosphate 1-phosphotransferase.